The sequence spans 234 residues: Ubiquinone biosynthesis O-methyltransferase (234 aa).

S-adenosyl-L-methionine-binding residues include R36, G56, D77, and M125.

Belongs to the methyltransferase superfamily. UbiG/COQ3 family.

The enzyme catalyses a 3-demethylubiquinol + S-adenosyl-L-methionine = a ubiquinol + S-adenosyl-L-homocysteine + H(+). The catalysed reaction is a 3-(all-trans-polyprenyl)benzene-1,2-diol + S-adenosyl-L-methionine = a 2-methoxy-6-(all-trans-polyprenyl)phenol + S-adenosyl-L-homocysteine + H(+). Its pathway is cofactor biosynthesis; ubiquinone biosynthesis. Functionally, O-methyltransferase that catalyzes the 2 O-methylation steps in the ubiquinone biosynthetic pathway. This chain is Ubiquinone biosynthesis O-methyltransferase, found in Actinobacillus pleuropneumoniae serotype 7 (strain AP76).